The chain runs to 177 residues: ATP synthase subunit delta (177 aa).

This sequence belongs to the ATPase delta chain family. In terms of assembly, F-type ATPases have 2 components, F(1) - the catalytic core - and F(0) - the membrane proton channel. F(1) has five subunits: alpha(3), beta(3), gamma(1), delta(1), epsilon(1). F(0) has three main subunits: a(1), b(2) and c(10-14). The alpha and beta chains form an alternating ring which encloses part of the gamma chain. F(1) is attached to F(0) by a central stalk formed by the gamma and epsilon chains, while a peripheral stalk is formed by the delta and b chains.

The protein localises to the cell inner membrane. Its function is as follows. F(1)F(0) ATP synthase produces ATP from ADP in the presence of a proton or sodium gradient. F-type ATPases consist of two structural domains, F(1) containing the extramembraneous catalytic core and F(0) containing the membrane proton channel, linked together by a central stalk and a peripheral stalk. During catalysis, ATP synthesis in the catalytic domain of F(1) is coupled via a rotary mechanism of the central stalk subunits to proton translocation. Functionally, this protein is part of the stalk that links CF(0) to CF(1). It either transmits conformational changes from CF(0) to CF(1) or is implicated in proton conduction. This Shewanella sediminis (strain HAW-EB3) protein is ATP synthase subunit delta.